The chain runs to 487 residues: ATP synthase subunit beta, plastid (487 aa).

Position 169 to 176 (169 to 176 (GGAGVGKT)) interacts with ATP.

The protein belongs to the ATPase alpha/beta chains family. In terms of assembly, F-type ATPases have 2 components, CF(1) - the catalytic core - and CF(0) - the membrane proton channel. CF(1) has five subunits: alpha(3), beta(3), gamma(1), delta(1), epsilon(1). CF(0) has four main subunits: a(1), b(1), b'(1) and c(9-12).

Its subcellular location is the plastid membrane. It catalyses the reaction ATP + H2O + 4 H(+)(in) = ADP + phosphate + 5 H(+)(out). Produces ATP from ADP in the presence of a proton gradient across the membrane. The catalytic sites are hosted primarily by the beta subunits. The polypeptide is ATP synthase subunit beta, plastid (atpB) (Cuscuta pentagona (Five-angled dodder)).